A 255-amino-acid chain; its full sequence is MTSMFSLKGKTTLITGGSGGIGFSIAKAFAAAGSNVGLLYGRNKKALEYAAELRDKHGVQAKAYSCPIENRSAVIETTNQAVEELGGRLDVMIANAGIAIPHLSLEDKNEDIWTKVVGINLNGAYYTAQAAGHHFKKQGKGSLIFTASMSGHIANWPQQWASYHATKAAVKHLARALAVEWAPFARVNSVSPGYIDTDLTLYADENLRKKWKEYTPQARIGLPDELPGAYLYLASDASSYCTGSDIIVDGGYCSR.

Residues I21 and N95 each coordinate NADP(+). Catalysis depends on proton donor residues S148 and Y163. Y163, K167, I195, and T197 together coordinate NADP(+). K167 serves as the catalytic Lowers pKa of active site Tyr.

It belongs to the short-chain dehydrogenases/reductases (SDR) family.

It carries out the reaction D-sorbitol + NADP(+) = keto-L-sorbose + NADPH + H(+). In terms of biological role, catalyzes the NADP dependent reduction of L-sorbose to D-glucitol. In Schizosaccharomyces pombe (strain 972 / ATCC 24843) (Fission yeast), this protein is Sorbose reductase sou1 (sou1).